A 348-amino-acid polypeptide reads, in one-letter code: Inositol 2-dehydrogenase/D-chiro-inositol 3-dehydrogenase (348 aa).

Belongs to the Gfo/Idh/MocA family. In terms of assembly, homotetramer.

The catalysed reaction is myo-inositol + NAD(+) = scyllo-inosose + NADH + H(+). The enzyme catalyses 1D-chiro-inositol + NAD(+) = scyllo-inosine + NADH + H(+). Its pathway is polyol metabolism; myo-inositol degradation into acetyl-CoA; acetyl-CoA from myo-inositol: step 1/7. Functionally, involved in the oxidation of myo-inositol (MI) and D-chiro-inositol (DCI) to 2-keto-myo-inositol (2KMI or 2-inosose) and 1-keto-D-chiro-inositol (1KDCI), respectively. This is Inositol 2-dehydrogenase/D-chiro-inositol 3-dehydrogenase from Halalkalibacterium halodurans (strain ATCC BAA-125 / DSM 18197 / FERM 7344 / JCM 9153 / C-125) (Bacillus halodurans).